A 417-amino-acid polypeptide reads, in one-letter code: Serine hydroxymethyltransferase (417 aa).

(6S)-5,6,7,8-tetrahydrofolate is bound by residues Leu121 and 125-127 (GHL). Lys229 is subject to N6-(pyridoxal phosphate)lysine. Residue 355–357 (SPF) participates in (6S)-5,6,7,8-tetrahydrofolate binding.

This sequence belongs to the SHMT family. In terms of assembly, homodimer. Pyridoxal 5'-phosphate is required as a cofactor.

The protein resides in the cytoplasm. The catalysed reaction is (6R)-5,10-methylene-5,6,7,8-tetrahydrofolate + glycine + H2O = (6S)-5,6,7,8-tetrahydrofolate + L-serine. It participates in one-carbon metabolism; tetrahydrofolate interconversion. It functions in the pathway amino-acid biosynthesis; glycine biosynthesis; glycine from L-serine: step 1/1. Catalyzes the reversible interconversion of serine and glycine with tetrahydrofolate (THF) serving as the one-carbon carrier. This reaction serves as the major source of one-carbon groups required for the biosynthesis of purines, thymidylate, methionine, and other important biomolecules. Also exhibits THF-independent aldolase activity toward beta-hydroxyamino acids, producing glycine and aldehydes, via a retro-aldol mechanism. The polypeptide is Serine hydroxymethyltransferase (Xanthomonas axonopodis pv. citri (strain 306)).